Reading from the N-terminus, the 361-residue chain is Protein-L-isoaspartate O-methyltransferase domain-containing protein 2 (361 aa).

G2 carries the N-myristoyl glycine lipid modification. S64 is an active-site residue. 3 adoMet binding motif regions span residues 85–94, 160–164, and 181–191; these read LNLGSGTGYL, YDRVY, and LKVGGILVMPL. Residues 240-250 are BC-box; sequence VRSLQDLARIA. Residues 303–336 are disordered; it reads SNPSDDNSCEDLEEERREEEEKTPPETKPDPPVN. Over residues 309–320 the composition is skewed to acidic residues; it reads NSCEDLEEERRE. The segment covering 321–331 has biased composition (basic and acidic residues); sequence EEEKTPPETKP. The interval 345–348 is CUL-box; the sequence is LPLP.

This sequence belongs to the methyltransferase superfamily. L-isoaspartyl/D-aspartyl protein methyltransferase family.

Its subcellular location is the cytoplasm. May act as a substrate recognition component of an ECS (Elongin BC-CUL5-SOCS-box protein) E3 ubiquitin ligase complex which mediates the ubiquitination and subsequent proteasomal degradation of target proteins. May bind to the methyltransferase cofactor S-adenosylmethionine (AdoMet) via the N-terminal AdoMet binding motif, but probably does not display methyltransferase activity. The polypeptide is Protein-L-isoaspartate O-methyltransferase domain-containing protein 2 (PCMTD2) (Homo sapiens (Human)).